The following is a 456-amino-acid chain: UDP-glycosyltransferase 74D1 (456 aa).

Residues Ser279, Ser332–Gln334, His349–Glu357, and Tyr371–Gln374 each bind UDP-alpha-D-glucose.

This sequence belongs to the UDP-glycosyltransferase family. In terms of tissue distribution, expressed in leaves.

Glucosyltransferase that glucosylates jasmonate (JA) and JA derivatives. Also active on indole-3-acetic acid (IAA), 4-coumrate, cinnamate and caffeate. The protein is UDP-glycosyltransferase 74D1 (UGT74D1) of Arabidopsis thaliana (Mouse-ear cress).